The sequence spans 443 residues: Trigger factor (443 aa).

Residues A161–P246 enclose the PPIase FKBP-type domain.

Belongs to the FKBP-type PPIase family. Tig subfamily.

The protein resides in the cytoplasm. It catalyses the reaction [protein]-peptidylproline (omega=180) = [protein]-peptidylproline (omega=0). In terms of biological role, involved in protein export. Acts as a chaperone by maintaining the newly synthesized protein in an open conformation. Functions as a peptidyl-prolyl cis-trans isomerase. The protein is Trigger factor of Nitrosococcus oceani (strain ATCC 19707 / BCRC 17464 / JCM 30415 / NCIMB 11848 / C-107).